The chain runs to 255 residues: Thiazole synthase (255 aa).

Lys95 serves as the catalytic Schiff-base intermediate with DXP. Residues Gly156, 182-183, and 204-205 each bind 1-deoxy-D-xylulose 5-phosphate; these read AG and NT.

Belongs to the ThiG family. In terms of assembly, homotetramer. Forms heterodimers with either ThiH or ThiS.

Its subcellular location is the cytoplasm. It carries out the reaction [ThiS sulfur-carrier protein]-C-terminal-Gly-aminoethanethioate + 2-iminoacetate + 1-deoxy-D-xylulose 5-phosphate = [ThiS sulfur-carrier protein]-C-terminal Gly-Gly + 2-[(2R,5Z)-2-carboxy-4-methylthiazol-5(2H)-ylidene]ethyl phosphate + 2 H2O + H(+). The protein operates within cofactor biosynthesis; thiamine diphosphate biosynthesis. Its function is as follows. Catalyzes the rearrangement of 1-deoxy-D-xylulose 5-phosphate (DXP) to produce the thiazole phosphate moiety of thiamine. Sulfur is provided by the thiocarboxylate moiety of the carrier protein ThiS. In vitro, sulfur can be provided by H(2)S. The sequence is that of Thiazole synthase from Vibrio campbellii (strain ATCC BAA-1116).